The following is a 617-amino-acid chain: Glutamyl-tRNA(Gln) amidotransferase subunit B, mitochondrial (617 aa).

Residues 1-56 (MPRIPTSVLGKYLLSGQISRQGCVGARQITRHSALPSAAVSVANSARLLHVSSETV) constitute a mitochondrion transit peptide. The segment at 53 to 90 (SETVPPPPAQPVPLRKQLKDEAKKAKKQGKKKSKGDSQ) is disordered. Positions 76–85 (KAKKQGKKKS) are enriched in basic residues.

Belongs to the GatB/GatE family. GatB subfamily. In terms of assembly, subunit of the heterotrimeric GatCAB amidotransferase (AdT) complex, composed of A, B and C subunits.

It is found in the mitochondrion. It catalyses the reaction L-glutamyl-tRNA(Gln) + L-glutamine + ATP + H2O = L-glutaminyl-tRNA(Gln) + L-glutamate + ADP + phosphate + H(+). Its function is as follows. Allows the formation of correctly charged Gln-tRNA(Gln) through the transamidation of misacylated Glu-tRNA(Gln) in the mitochondria. The reaction takes place in the presence of glutamine and ATP through an activated gamma-phospho-Glu-tRNA(Gln). The protein is Glutamyl-tRNA(Gln) amidotransferase subunit B, mitochondrial of Fusarium vanettenii (strain ATCC MYA-4622 / CBS 123669 / FGSC 9596 / NRRL 45880 / 77-13-4) (Fusarium solani subsp. pisi).